The following is a 68-amino-acid chain: MSSGASASALQRLVEQLKLEAGVERIKVSQAAAELQQYCMQNACKDALLVGVPAGSNPFREPRSCALL.

The residue at position 2 (Ser2) is an N-acetylserine. Cys65 bears the Cysteine methyl ester mark. The S-geranylgeranyl cysteine moiety is linked to residue Cys65. Positions 66–68 (ALL) are cleaved as a propeptide — removed in mature form.

The protein belongs to the G protein gamma family. As to quaternary structure, g proteins are composed of 3 units, alpha, beta and gamma. Abundantly and ubiquitously expressed.

It localises to the cell membrane. Functionally, guanine nucleotide-binding proteins (G proteins) are involved as a modulator or transducer in various transmembrane signaling systems. The beta and gamma chains are required for the GTPase activity, for replacement of GDP by GTP, and for G protein-effector interaction. Interacts with beta-1 and beta-2, but not with beta-3. The protein is Guanine nucleotide-binding protein G(I)/G(S)/G(O) subunit gamma-10 (GNG10) of Homo sapiens (Human).